Consider the following 93-residue polypeptide: Leydig cell tumor 10 kDa protein (93 aa).

A disordered region spans residues 1–41; sequence MAQGQRKFQAQKPKSKAAAAERSRGPRKGGRVIGPKKARVV. The span at 7-18 shows a compositional bias: low complexity; the sequence is KFQAQKPKSKAA. Positions 25 to 39 are enriched in basic residues; it reads GPRKGGRVIGPKKAR.

The protein belongs to the UPF0390 family. Leydig cell tumor, testis and placenta.

Its function is as follows. May have a potential role in hypercalcemia of malignancy. In Rattus norvegicus (Rat), this protein is Leydig cell tumor 10 kDa protein.